Here is a 290-residue protein sequence, read N- to C-terminus: Uridine diphosphate glucose pyrophosphatase NUDT22 (290 aa).

Substrate contacts are provided by Phe-56, Tyr-87, Arg-139, Ala-144, Asp-151, His-156, and Glu-158. In terms of domain architecture, Nudix hydrolase spans 118 to 285; it reads ADPLGVGAAL…KGAIFLYNRV (168 aa). Residues 175-196 carry the Nudix box motif; sequence GELVVHELFSSVLQEICDEVNV. The Mg(2+) site is built by Glu-189 and Glu-193. Position 274 (Ser-274) interacts with substrate.

It belongs to the Nudix family. Mg(2+) serves as cofactor.

It carries out the reaction UDP-sugar + H2O = UMP + alpha-D-aldose 1-phosphate.. Its function is as follows. Hydrolyzes UDP-glucose to glucose 1-phosphate and UMP and UDP-galactose to galactose 1-phosphate and UMP. Preferred substrate is UDP-glucose. The chain is Uridine diphosphate glucose pyrophosphatase NUDT22 (NUDT22) from Bos taurus (Bovine).